Reading from the N-terminus, the 493-residue chain is MEYKGKVVAGLLTATCVFSIIALILSAVDVKDVFLPPGTKYGLVFDAGSTHTALYVYQWPADKENGTGIVSQVESCTVNGSGISSYADDPAGAGASLKPCLDKAMAVIPVEQQWQTPTYLGATAGMRLLREQNSTKAEQVFAEVSKAIREFPVDFRGAQILTGNEEGSFGWITVNYLLETLIKFSFAGKWEHPQNTEVLGALDLGGASTQITFQPGVTIEDKNTSVLFRLYGTNYSLYTHSYLCYGQIQASKRLMAALHQDGSYVQNISHPCYPKGYRRIITIAEIYDSPCVPTPSMLSPAQILTVTGTGNPAACPTAILKLFNLTCGANRTCGFDGVYQPPVRGQFFAFAGFYYTFSFLNLTGQQSLSHVNATVWDFCNKNWSELVETFPQNKEHLHTYCVVGLYILTLLVDGYKFDEHTWSNIHFSQKAGNADIGWTLGFMLNLTNMIPTEALEHVKGHEPSLWAGAISFIVLAIVAGLVAILLQCFWKSK.

Residues 1–7 (MEYKGKV) lie on the Cytoplasmic side of the membrane. The chain crosses the membrane as a helical span at residues 8–28 (VAGLLTATCVFSIIALILSAV). At 29–463 (DVKDVFLPPG…ALEHVKGHEP (435 aa)) the chain is on the extracellular side. 3 N-linked (GlcNAc...) asparagine glycosylation sites follow: N65, N79, and N133. The cysteines at positions 76 and 100 are disulfide-linked. The active-site Proton acceptor is the E166. N223, N234, N267, N324, N330, N361, N372, N382, and N445 each carry an N-linked (GlcNAc...) asparagine glycan. C244 and C291 are oxidised to a cystine. C327 and C333 are disulfide-bonded. An intrachain disulfide couples C379 to C401. A helical transmembrane segment spans residues 464–486 (SLWAGAISFIVLAIVAGLVAILL). At 487–493 (QCFWKSK) the chain is on the cytoplasmic side.

The protein belongs to the GDA1/CD39 NTPase family. It depends on Ca(2+) as a cofactor. Mg(2+) serves as cofactor. N-glycosylated.

It is found in the cell membrane. The catalysed reaction is a ribonucleoside 5'-triphosphate + 2 H2O = a ribonucleoside 5'-phosphate + 2 phosphate + 2 H(+). Its function is as follows. Canalicular ectonucleoside NTPDase responsible for the main hepatic NTPDase activity. Ectonucleoside ATPases catalyze the hydrolysis of gamma- and beta-phosphate residues of nucleotides, playing a central role in concentration of extracellular nucleotides. This Gallus gallus (Chicken) protein is Ectonucleoside triphosphate diphosphohydrolase 8 (ENTPD8).